Reading from the N-terminus, the 160-residue chain is Thioredoxin-like protein 4A homolog (160 aa).

The tract at residues 132–160 is disordered; it reads KFLKKKKKKKNKKKQKKKIKKIKKKIKNN. Positions 133–160 are enriched in basic residues; that stretch reads FLKKKKKKKNKKKQKKKIKKIKKKIKNN.

This sequence belongs to the DIM1 family. Component of the precatalytic spliceosome (spliceosome B complex). Component of the U5 snRNP complex. Component of the U4/U6-U5 tri-snRNP complex.

It localises to the nucleus. Its function is as follows. Plays a role in pre-mRNA splicing as component of the U5 snRNP and U4/U6-U5 tri-snRNP complexes that are involved in spliceosome assembly, and as component of the precatalytic spliceosome (spliceosome B complex). The chain is Thioredoxin-like protein 4A homolog (txnl4a) from Dictyostelium discoideum (Social amoeba).